The primary structure comprises 852 residues: Mannosyl-oligosaccharide glucosidase GCS1 (852 aa).

The disordered stretch occupies residues 1–31; it reads MTGASRRSARGRIKSSSLSPGSDEGSAYPPS. The Cytoplasmic portion of the chain corresponds to 1–51; the sequence is MTGASRRSARGRIKSSSLSPGSDEGSAYPPSIRRGKGKELVSIGAFKTNLK. The short motif at 6 to 12 is the Endoplasmic reticulum targeting element; that stretch reads RRSARGR. Residues 15-26 are compositionally biased toward low complexity; it reads SSSLSPGSDEGS. A helical; Signal-anchor for type II membrane protein transmembrane segment spans residues 52-72; sequence ILVGLIILGIIVIYFVINRLV. Residues 73-852 lie on the Lumenal side of the membrane; that stretch reads RHGLLFDESQ…LIMSEDYPIF (780 aa). The required for endoplasmic reticulum targeting stretch occupies residues 91–150; sequence PAPKVMDLSMFQGEHKESLYWGTYRPHVYFGVRARTPLSLVAGLMWLGVKDEMYVMRHFC. N-linked (GlcNAc...) asparagine glycosylation is found at asparagine 282, asparagine 552, and asparagine 570. Residues 574-583 show a composition bias toward polar residues; sequence QELNPKTLSS. Residues 574–593 form a disordered region; that stretch reads QELNPKTLSSGLDDYPRASH. The Proton donor role is filled by aspartate 586. Asparagine 633, asparagine 662, and asparagine 730 each carry an N-linked (GlcNAc...) asparagine glycan. The active-site Proton acceptor is glutamate 819.

The protein belongs to the glycosyl hydrolase 63 family. In terms of tissue distribution, constitutively expressed in roots, stems, leaves, flowers and siliques.

It localises to the endoplasmic reticulum membrane. The enzyme catalyses N(4)-(alpha-D-Glc-(1-&gt;2)-alpha-D-Glc-(1-&gt;3)-alpha-D-Glc-(1-&gt;3)-alpha-D-Man-(1-&gt;2)-alpha-D-Man-(1-&gt;2)-alpha-D-Man-(1-&gt;3)-[alpha-D-Man-(1-&gt;2)-alpha-D-Man-(1-&gt;3)-[alpha-D-Man-(1-&gt;2)-alpha-D-Man-(1-&gt;6)]-alpha-D-Man-(1-&gt;6)]-beta-D-Man-(1-&gt;4)-beta-D-GlcNAc-(1-&gt;4)-beta-D-GlcNAc)-L-asparaginyl-[protein] + H2O = N(4)-(alpha-D-Glc-(1-&gt;3)-alpha-D-Glc-(1-&gt;3)-alpha-D-Man-(1-&gt;2)-alpha-D-Man-(1-&gt;2)-alpha-D-Man-(1-&gt;3)-[alpha-D-Man-(1-&gt;2)-alpha-D-Man-(1-&gt;3)-[alpha-D-Man-(1-&gt;2)-alpha-D-Man-(1-&gt;6)]-alpha-D-Man-(1-&gt;6)]-beta-D-Man-(1-&gt;4)-beta-D-GlcNAc-(1-&gt;4)-beta-D-GlcNAc)-L-asparaginyl-[protein] + beta-D-glucose. Its pathway is glycan metabolism; N-glycan degradation. In terms of biological role, cleaves the distal alpha 1,2-linked glucose residue from the Glc(3)Man(9)GlcNAc(2) oligosaccharide precursor. Required for the accumulation of seed storage proteins, the formation of protein bodies, cell differentiation, cellulose biosynthesis and organization (in cell walls), cell shape determination and organization (e.g. epidermal cells), and embryo development. Involved in root development. The chain is Mannosyl-oligosaccharide glucosidase GCS1 (GCS1) from Arabidopsis thaliana (Mouse-ear cress).